Consider the following 474-residue polypeptide: 3-isopropylmalate dehydratase large subunit (474 aa).

[4Fe-4S] cluster is bound by residues C355, C415, and C418.

This sequence belongs to the aconitase/IPM isomerase family. LeuC type 1 subfamily. In terms of assembly, heterodimer of LeuC and LeuD. It depends on [4Fe-4S] cluster as a cofactor.

It catalyses the reaction (2R,3S)-3-isopropylmalate = (2S)-2-isopropylmalate. It participates in amino-acid biosynthesis; L-leucine biosynthesis; L-leucine from 3-methyl-2-oxobutanoate: step 2/4. In terms of biological role, catalyzes the isomerization between 2-isopropylmalate and 3-isopropylmalate, via the formation of 2-isopropylmaleate. The polypeptide is 3-isopropylmalate dehydratase large subunit (Shewanella oneidensis (strain ATCC 700550 / JCM 31522 / CIP 106686 / LMG 19005 / NCIMB 14063 / MR-1)).